A 423-amino-acid chain; its full sequence is Enolase (423 aa).

(2R)-2-phosphoglycerate is bound at residue glutamine 162. The active-site Proton donor is the glutamate 204. The Mg(2+) site is built by aspartate 241, glutamate 284, and aspartate 311. Residues lysine 336, arginine 365, serine 366, and lysine 387 each contribute to the (2R)-2-phosphoglycerate site. The Proton acceptor role is filled by lysine 336.

Belongs to the enolase family. Mg(2+) is required as a cofactor.

The protein localises to the cytoplasm. The protein resides in the secreted. Its subcellular location is the cell surface. It carries out the reaction (2R)-2-phosphoglycerate = phosphoenolpyruvate + H2O. Its pathway is carbohydrate degradation; glycolysis; pyruvate from D-glyceraldehyde 3-phosphate: step 4/5. Functionally, catalyzes the reversible conversion of 2-phosphoglycerate (2-PG) into phosphoenolpyruvate (PEP). It is essential for the degradation of carbohydrates via glycolysis. This chain is Enolase, found in Bartonella bacilliformis (strain ATCC 35685 / KC583 / Herrer 020/F12,63).